The primary structure comprises 496 residues: Lysine--tRNA ligase (496 aa).

Mg(2+) contacts are provided by glutamate 408 and glutamate 415.

Belongs to the class-II aminoacyl-tRNA synthetase family. Homodimer. It depends on Mg(2+) as a cofactor.

It is found in the cytoplasm. The catalysed reaction is tRNA(Lys) + L-lysine + ATP = L-lysyl-tRNA(Lys) + AMP + diphosphate. This chain is Lysine--tRNA ligase, found in Legionella pneumophila (strain Paris).